The sequence spans 498 residues: Capsanthin/capsorubin synthase, chromoplastic (498 aa).

The transit peptide at 1–52 directs the protein to the chromoplast; the sequence is METLLKPFPSPLLSIPTPNMYSFKHNSTFPNPTKQKDSRKFHYRNKSSTHFC. 84-112 provides a ligand contact to NAD(+); the sequence is VIIIGTGPAGLRLAEQVSKYGIKVCCVDP. An FLEET motif motif is present at residues 293-297; the sequence is FLEET.

The protein belongs to the lycopene cyclase family. In terms of assembly, monomer. The cofactor is FAD. It depends on NADPH as a cofactor.

The protein localises to the plastid. The protein resides in the chromoplast. The catalysed reaction is all-trans-violaxanthin = all-trans-capsorubin. It catalyses the reaction all-trans-antheraxanthin = all-trans-capsanthin. The enzyme catalyses all-trans-violaxanthin = (5R,6S)-5,6-epoxi-capsanthin. It carries out the reaction (5R,6S)-5,6-epoxi-capsanthin = all-trans-capsorubin. Its pathway is carotenoid biosynthesis; capsanthin biosynthesis; capsanthin from antheraxanthin: step 1/1. It participates in carotenoid biosynthesis; capsorubin biosynthesis; capsorubin from violaxanthin: step 1/1. Catalyzes the conversion of the ubiquitous 5,6-epoxycarotenoids, antheraxanthin and violaxanthin, into capsanthin and capsorubin, respectively. This Capsicum annuum (Capsicum pepper) protein is Capsanthin/capsorubin synthase, chromoplastic.